The sequence spans 414 residues: MIOREX complex component 10 (414 aa).

The transit peptide at 1–29 (MLSFRSLTSTFGFVSRFQIRRLGTSLSIQ) directs the protein to the mitochondrion. At 30–373 (NLEVQDGRWK…ISLLNERNST (344 aa)) the chain is on the mitochondrial matrix side. The helical transmembrane segment at 374–394 (FLEWIIIYLIAFELCFEIYHF) threads the bilayer. The Mitochondrial intermembrane portion of the chain corresponds to 395–414 (YQKYSSYCSEPTNDDLDATK).

This sequence belongs to the RMD1/sif2 family. In terms of assembly, associates with the mitochondrial ribosome.

The protein localises to the mitochondrion inner membrane. Functionally, component of MIOREX complexes, large expressome-like assemblies of ribosomes with factors involved in all the steps of post-transcriptional gene expression. This is MIOREX complex component 10 from Saccharomyces cerevisiae (strain ATCC 204508 / S288c) (Baker's yeast).